A 490-amino-acid polypeptide reads, in one-letter code: MADALRFVAWSCCLQLLFLLLGVQGYEVPKAKIDVFYPKGFEVSIPDEEGITLFAFHGKLNEEMEGLEAGTWARDIVKAKNGRWTFRDRITALKPGDTLYYWTYVIYNGLGYREDDGSFVVNGYSGNNASPHPPVVPVSTTPWTPPADPDIDIRLGCTTPKTEVNGAPTRCAGQLVFVDEFNAAKLDPNKWKAERRFSGQPDYEFNVYVDDAPETLCLANGHVVLSTNTMKKQFKKGSGESLDLGEKCTGQANTHDCVRNGRTLNDGLPPMVTAQFSSKDFSFKYGRVEVRAKMPRAQWVTPQIWLQPRRPIYGVDDYRSGQLRIAYTRPNGGNLDLYGAAVLFADEPLRSVKNCLKPGTGNNSEDWSDSFHNYTLEWTPRELRWLVDGKEWCVQGSAKGSFSETTAAGKSLPQAQKLEEGTGLAPFDQEFYLTFGLSVGGFNEYQHEIKPWNERAPQAQKAFWKEVKKIRDHWLDEGHMKIDYVKVYSL.

The N-terminal stretch at 1–25 is a signal peptide; the sequence is MADALRFVAWSCCLQLLFLLLGVQG. The 101-residue stretch at 26–126 folds into the CBM39 domain; the sequence is YEVPKAKIDV…GSFVVNGYSG (101 aa). The region spanning 162-490 is the GH16 domain; sequence TEVNGAPTRC…KIDYVKVYSL (329 aa). Residues Asn362 and Asn373 are each glycosylated (N-linked (GlcNAc...) asparagine).

The protein belongs to the insect beta-1,3-glucan binding protein family.

Its subcellular location is the secreted. Functionally, involved in the recognition of invading microorganisms. Binds specifically to beta-1,3-glucan and activates the phenoloxidase cascade. The chain is Gram-negative bacteria-binding protein 3 from Drosophila melanogaster (Fruit fly).